The following is a 362-amino-acid chain: NAD(P)H-quinone oxidoreductase subunit 1, chloroplastic (362 aa).

8 helical membrane-spanning segments follow: residues 29-49 (ILPI…IVWL), 103-123 (IAVI…HFVL), 128-148 (IGVF…LMAG), 164-184 (AAQS…ISLL), 202-222 (FFGW…ISSL), 247-267 (YSGI…LVSS), 303-323 (TMGI…SITI), and 342-362 (FLLP…LVSL).

Belongs to the complex I subunit 1 family. NDH is composed of at least 16 different subunits, 5 of which are encoded in the nucleus.

It localises to the plastid. The protein resides in the chloroplast thylakoid membrane. The enzyme catalyses a plastoquinone + NADH + (n+1) H(+)(in) = a plastoquinol + NAD(+) + n H(+)(out). It catalyses the reaction a plastoquinone + NADPH + (n+1) H(+)(in) = a plastoquinol + NADP(+) + n H(+)(out). Functionally, NDH shuttles electrons from NAD(P)H:plastoquinone, via FMN and iron-sulfur (Fe-S) centers, to quinones in the photosynthetic chain and possibly in a chloroplast respiratory chain. The immediate electron acceptor for the enzyme in this species is believed to be plastoquinone. Couples the redox reaction to proton translocation, and thus conserves the redox energy in a proton gradient. The polypeptide is NAD(P)H-quinone oxidoreductase subunit 1, chloroplastic (Hordeum vulgare (Barley)).